The primary structure comprises 249 residues: 1-(5-phosphoribosyl)-5-[(5-phosphoribosylamino)methylideneamino] imidazole-4-carboxamide isomerase (249 aa).

Residue aspartate 8 is the Proton acceptor of the active site. Aspartate 130 serves as the catalytic Proton donor.

Belongs to the HisA/HisF family.

Its subcellular location is the cytoplasm. It catalyses the reaction 1-(5-phospho-beta-D-ribosyl)-5-[(5-phospho-beta-D-ribosylamino)methylideneamino]imidazole-4-carboxamide = 5-[(5-phospho-1-deoxy-D-ribulos-1-ylimino)methylamino]-1-(5-phospho-beta-D-ribosyl)imidazole-4-carboxamide. It functions in the pathway amino-acid biosynthesis; L-histidine biosynthesis; L-histidine from 5-phospho-alpha-D-ribose 1-diphosphate: step 4/9. In Nitrosococcus oceani (strain ATCC 19707 / BCRC 17464 / JCM 30415 / NCIMB 11848 / C-107), this protein is 1-(5-phosphoribosyl)-5-[(5-phosphoribosylamino)methylideneamino] imidazole-4-carboxamide isomerase.